The following is a 478-amino-acid chain: Secretogranin-3 (478 aa).

An N-terminal signal peptide occupies residues 1-21 (MASKRLGFVVVLALVCQHINA). Disordered stretches follow at residues 22 to 126 (FPTP…NGMD) and 208 to 287 (IGDR…EDGL). Basic and acidic residues predominate over residues 28–42 (PDDKYNRELTEEKPL). Acidic residues predominate over residues 63–74 (AEEETNSEDDDI). Residues 97-120 (ANERLGADDTDSTKNRRLADDYDS) are compositionally biased toward basic and acidic residues. The segment covering 235–259 (DEEDEVENEGGDDANGDEPQEEESR) has biased composition (acidic residues).

Its subcellular location is the cytoplasmic vesicle. It localises to the secretory vesicle lumen. It is found in the secretory vesicle membrane. The protein localises to the secreted. In Danio rerio (Zebrafish), this protein is Secretogranin-3 (scg3).